Here is a 193-residue protein sequence, read N- to C-terminus: Peptidyl-tRNA hydrolase (193 aa).

Residue Y14 participates in tRNA binding. The active-site Proton acceptor is H19. 3 residues coordinate tRNA: F64, N66, and N112.

It belongs to the PTH family. In terms of assembly, monomer.

It localises to the cytoplasm. The enzyme catalyses an N-acyl-L-alpha-aminoacyl-tRNA + H2O = an N-acyl-L-amino acid + a tRNA + H(+). Functionally, hydrolyzes ribosome-free peptidyl-tRNAs (with 1 or more amino acids incorporated), which drop off the ribosome during protein synthesis, or as a result of ribosome stalling. Its function is as follows. Catalyzes the release of premature peptidyl moieties from peptidyl-tRNA molecules trapped in stalled 50S ribosomal subunits, and thus maintains levels of free tRNAs and 50S ribosomes. The protein is Peptidyl-tRNA hydrolase of Bartonella quintana (strain Toulouse) (Rochalimaea quintana).